We begin with the raw amino-acid sequence, 378 residues long: POU domain, class 3, transcription factor 2 (378 aa).

Disordered regions lie at residues 1–28, 86–118, and 151–205; these read MATTASNHYNILTSSPSIVHSEPGSMQQ, SPRDEMHNSSNLQHQSRPPHLVHQTHGNHHDSR, and LIPG…TPTS. The segment covering 164–181 has biased composition (basic and acidic residues); it reads MRDAHEDHHSPHLSDHGH. Residues 200–274 enclose the POU-specific domain; that stretch reads EDTPTSDDLE…LLNKWLEEAD (75 aa). At Ser279 the chain carries Phosphoserine. Positions 292-351 form a DNA-binding region, homeobox; that stretch reads KRKKRTSIEVSVKGALESHFLKCPKPAASEITSLADSLQLEKEVVRVWFCNRRQKEKRMT. Residues 347–378 are disordered; it reads EKRMTPPGGPLPGTEDVYGDTPPHHGVQTPVQ.

This sequence belongs to the POU transcription factor family. Class-3 subfamily. As to expression, predominantly expressed in the central nervous system, with strong expression in the cerebellum.

It is found in the nucleus. Its function is as follows. Transcription factor that may play important roles in patterning the embryonic brain. The polypeptide is POU domain, class 3, transcription factor 2 (pou3f2) (Danio rerio (Zebrafish)).